Here is a 382-residue protein sequence, read N- to C-terminus: DNA double-strand break repair protein Mre11 (382 aa).

Positions 8, 10, 49, and 84 each coordinate Mn(2+). His85 functions as the Proton donor in the catalytic mechanism. Mn(2+) is bound by residues His156, His187, and His189.

It belongs to the MRE11/RAD32 family. In terms of assembly, homodimer. Forms a heterotetramer composed of two Mre11 subunits and two Rad50 subunits. Interacts with Rad50 and HerA. The cofactor is Mn(2+).

Nuclease activity is regulated by Rad50. In terms of biological role, part of the Rad50/Mre11 complex, which is involved in the early steps of DNA double-strand break (DSB) repair. The complex may facilitate opening of the processed DNA ends to aid in the recruitment of HerA and NurA. Mre11 binds to DSB ends and has both double-stranded 3'-5' exonuclease activity and single-stranded endonuclease activity. Recruited immediately to chromosomal DNA after gamma irradiation, and remains DNA bound in the course of DNA repair. The polypeptide is DNA double-strand break repair protein Mre11 (Sulfolobus acidocaldarius (strain ATCC 33909 / DSM 639 / JCM 8929 / NBRC 15157 / NCIMB 11770)).